A 487-amino-acid chain; its full sequence is Cytochrome c-552 (487 aa).

Positions 1–27 (MSKKWTRNTAAMAAILSALCLSTNALA) are cleaved as a signal peptide. Histidine 104 is a heme c binding site. Heme is bound by residues cysteine 132, cysteine 135, and lysine 136. Residues cysteine 170, cysteine 173, histidine 174, cysteine 219, cysteine 222, and histidine 223 each coordinate heme c. Residues glutamate 225, tyrosine 226, lysine 271, and glutamine 273 each contribute to the Ca(2+) site. Tyrosine 226 contacts substrate. Residue histidine 274 participates in substrate binding. Histidine 285, cysteine 292, cysteine 295, histidine 296, histidine 311, cysteine 324, cysteine 327, histidine 328, and histidine 403 together coordinate heme c.

This sequence belongs to the cytochrome c-552 family. Ca(2+) is required as a cofactor. It depends on heme c as a cofactor.

It is found in the periplasm. The enzyme catalyses 6 Fe(III)-[cytochrome c] + NH4(+) + 2 H2O = 6 Fe(II)-[cytochrome c] + nitrite + 8 H(+). The protein operates within nitrogen metabolism; nitrate reduction (assimilation). In terms of biological role, catalyzes the reduction of nitrite to ammonia, consuming six electrons in the process. This is Cytochrome c-552 from Photobacterium profundum (strain SS9).